A 704-amino-acid polypeptide reads, in one-letter code: Pentatricopeptide repeat-containing protein At4g28010 (704 aa).

PPR repeat units follow at residues 71-105, 106-140, 141-175, 176-210, 211-245, 246-280, 281-315, 316-350, 351-385, 386-416, 423-453, 458-492, 493-527, 528-562, 563-597, 598-632, and 633-667; these read LAFA…DTFI, NFVS…GFAF, NVYN…SLMP, DVFS…GCSW, SLVT…GLEA, DLVV…GDSP, CAIT…GVRP, NVYT…DEEP, NAVT…RTRP, DNIT…MLKD, DVIS…LVEK, DRVT…KIVR, NSDT…ELQP, SVFD…NNFP, DVVS…GLSP, DLFT…GFEP, and DAHI…DIVL.

This sequence belongs to the PPR family. P subfamily.

The chain is Pentatricopeptide repeat-containing protein At4g28010 from Arabidopsis thaliana (Mouse-ear cress).